The following is a 162-amino-acid chain: Cyclic pyranopterin monophosphate synthase (162 aa).

Residues 75 to 77 (LCH) and 113 to 114 (ME) each bind substrate. Aspartate 128 is a catalytic residue.

Belongs to the MoaC family. As to quaternary structure, homohexamer; trimer of dimers.

It carries out the reaction (8S)-3',8-cyclo-7,8-dihydroguanosine 5'-triphosphate = cyclic pyranopterin phosphate + diphosphate. It participates in cofactor biosynthesis; molybdopterin biosynthesis. Its function is as follows. Catalyzes the conversion of (8S)-3',8-cyclo-7,8-dihydroguanosine 5'-triphosphate to cyclic pyranopterin monophosphate (cPMP). The polypeptide is Cyclic pyranopterin monophosphate synthase (Xanthobacter autotrophicus (strain ATCC BAA-1158 / Py2)).